The primary structure comprises 334 residues: MIEADRLIAADAQSEEEFLDRAIRPKTLADYVGQPQVRGQMEIFIKAAKLRGDALDHLLIFGPPGLGKTTLANIVANEMGVNLRTTSGPVLEKAGDLAAMLTNLEPHDVLFIDEIHRLSPVVEEVLYPAMEDYQLDIMIGEGPAARSIKIDLPPFTLVGATTRAGSLTSPLRDRFGIVQRLEFYQVADLQHIVGRSAHCLGLALTDEGALEVARRSRGTPRIANRLLRRVRDFAEVCADGRIDGEVAAQALNMLDVDAAGFDYMDRKLLLAVIDKFMGGPVGLDNLAAAIGEERETIEDVLEPYLIQQGFIQRTPRGRIATVHAYQHFGIDRAE.

The segment at 4 to 184 (ADRLIAADAQ…FGIVQRLEFY (181 aa)) is large ATPase domain (RuvB-L). ATP-binding positions include I23, R24, G65, K68, T69, T70, 131-133 (EDY), R174, Y184, and R221. T69 contributes to the Mg(2+) binding site. The small ATPAse domain (RuvB-S) stretch occupies residues 185–255 (QVADLQHIVG…VAAQALNMLD (71 aa)). A head domain (RuvB-H) region spans residues 258-334 (AAGFDYMDRK…YQHFGIDRAE (77 aa)). R294, R313, and R318 together coordinate DNA.

The protein belongs to the RuvB family. As to quaternary structure, homohexamer. Forms an RuvA(8)-RuvB(12)-Holliday junction (HJ) complex. HJ DNA is sandwiched between 2 RuvA tetramers; dsDNA enters through RuvA and exits via RuvB. An RuvB hexamer assembles on each DNA strand where it exits the tetramer. Each RuvB hexamer is contacted by two RuvA subunits (via domain III) on 2 adjacent RuvB subunits; this complex drives branch migration. In the full resolvosome a probable DNA-RuvA(4)-RuvB(12)-RuvC(2) complex forms which resolves the HJ.

The protein resides in the cytoplasm. The catalysed reaction is ATP + H2O = ADP + phosphate + H(+). Its function is as follows. The RuvA-RuvB-RuvC complex processes Holliday junction (HJ) DNA during genetic recombination and DNA repair, while the RuvA-RuvB complex plays an important role in the rescue of blocked DNA replication forks via replication fork reversal (RFR). RuvA specifically binds to HJ cruciform DNA, conferring on it an open structure. The RuvB hexamer acts as an ATP-dependent pump, pulling dsDNA into and through the RuvAB complex. RuvB forms 2 homohexamers on either side of HJ DNA bound by 1 or 2 RuvA tetramers; 4 subunits per hexamer contact DNA at a time. Coordinated motions by a converter formed by DNA-disengaged RuvB subunits stimulates ATP hydrolysis and nucleotide exchange. Immobilization of the converter enables RuvB to convert the ATP-contained energy into a lever motion, pulling 2 nucleotides of DNA out of the RuvA tetramer per ATP hydrolyzed, thus driving DNA branch migration. The RuvB motors rotate together with the DNA substrate, which together with the progressing nucleotide cycle form the mechanistic basis for DNA recombination by continuous HJ branch migration. Branch migration allows RuvC to scan DNA until it finds its consensus sequence, where it cleaves and resolves cruciform DNA. The polypeptide is Holliday junction branch migration complex subunit RuvB (Edwardsiella ictaluri (strain 93-146)).